Here is a 219-residue protein sequence, read N- to C-terminus: Ribose-5-phosphate isomerase A (219 aa).

Substrate contacts are provided by residues 28–31 (TGST), 81–84 (DGAD), and 94–97 (KGGG). Residue Glu103 is the Proton acceptor of the active site. Position 121 (Lys121) interacts with substrate.

It belongs to the ribose 5-phosphate isomerase family. Homodimer.

The catalysed reaction is aldehydo-D-ribose 5-phosphate = D-ribulose 5-phosphate. The protein operates within carbohydrate degradation; pentose phosphate pathway; D-ribose 5-phosphate from D-ribulose 5-phosphate (non-oxidative stage): step 1/1. In terms of biological role, catalyzes the reversible conversion of ribose-5-phosphate to ribulose 5-phosphate. This Enterobacter cloacae protein is Ribose-5-phosphate isomerase A.